A 429-amino-acid polypeptide reads, in one-letter code: O-methyltransferase phnC (429 aa).

Aspartate 285 is an S-adenosyl-L-methionine binding site.

It belongs to the class I-like SAM-binding methyltransferase superfamily. Cation-independent O-methyltransferase family. COMT subfamily.

It carries out the reaction (2'R)-atrovenetin + S-adenosyl-L-methionine = deoxyherqueinone + S-adenosyl-L-homocysteine + H(+). Its pathway is secondary metabolite biosynthesis. Its function is as follows. O-methyltransferase; part of the gene cluster that mediates the biosynthesis of phenalenones such as herqueinone, compounds that have been reported to treat tumors, bacterial infections and/or mycoses, and rheumatic diseases. The non-reducing polyketide synthase phnA synthesizes the heptaketide backbone and cyclizes it into the angular, hemiketal-containing naphtho-gamma-pyrone prephenalenone. The product template (PT) domain of phnA catalyzes only the C4-C9 aldol condensation, which is unprecedented among known PT domains. The transformation of prephenalenone to phenalenones requires an FAD-dependent monooxygenase phnB, which catalyzes the C2 aromatic hydroxylation of prephenalenone and ring opening of the gamma-pyrone ring simultaneously. Subsequent intramolecular deprotonation of C3 phenolic oxygen accelerates phenalenone ring closure to yield the tricyclic phenalenone core with a C2 hydroxylation. The prenyltransferase phnF further catalyzes reverse C-prenylation of phenalenone by direct electrophilic substitution at C6, or possibly via first a forward O-prenylation of a neighboring phenol in phenalenone, followed by a Claisen rearrangement. The hydroalkoxylation enzyme phnH catalyzes the 5-exo-trig cyclization via acid catalysis after the spontaneous deprotonation of 7-OH, which leads to the formation of the dihydrobenzofuran atrovenetin. Atrovenetin is further converted to deoxyherqueinone by the O-methyltransferase phnC which can methylate C2-OH to stabilize the northern portion of the phenalenone core. Finally, the oxidoreductase phnG converts deoxyherqueinone to herqueinone via C6 hydroxylation. The polypeptide is O-methyltransferase phnC (Penicillium herquei).